The chain runs to 609 residues: UvrABC system protein C (609 aa).

One can recognise a GIY-YIG domain in the interval 19 to 97 (ASPGCYLWKS…IKKHNPRFNV (79 aa)). The region spanning 208-243 (ESLVSDLNIKMSNASERLDFEKAARYRDMLQRIQNF) is the UVR domain.

This sequence belongs to the UvrC family. As to quaternary structure, interacts with UvrB in an incision complex.

It is found in the cytoplasm. Its function is as follows. The UvrABC repair system catalyzes the recognition and processing of DNA lesions. UvrC both incises the 5' and 3' sides of the lesion. The N-terminal half is responsible for the 3' incision and the C-terminal half is responsible for the 5' incision. This Leptospira interrogans serogroup Icterohaemorrhagiae serovar Lai (strain 56601) protein is UvrABC system protein C.